Consider the following 449-residue polypeptide: Putative transporter C83.11 (449 aa).

9 helical membrane-spanning segments follow: residues 7–27, 47–67, 84–104, 109–129, 136–156, 164–184, 205–225, 255–275, and 278–298; these read LSHILFHEKVGFLLLCLLWYI, VTLTFLQFGFVAFFSAVCLLF, VLYTTLPLSIFQIGGHVFGSL, IPVSTVHTVKALSPLFTVLAY, VYSAMTYFSLVPLTFGVTLAC, IVGLLYALISTCIFVSQNIFG, LNLLLYSSGVAFIVMIPVWLY, ILAFTLLSIISPVAYSIASLI, and IFVIVVSIIWFQQATNFTQGS. Residues S348 and S352 each carry the phosphoserine modification. Phosphotyrosine is present on Y355. Residues 382–415 show a composition bias toward polar residues; it reads NSVYSNEGVTSSVSGNATPASVRQSTQNDFSNSN. The interval 382–416 is disordered; it reads NSVYSNEGVTSSVSGNATPASVRQSTQNDFSNSNI.

This sequence belongs to the TPT transporter family.

The protein localises to the membrane. The polypeptide is Putative transporter C83.11 (Schizosaccharomyces pombe (strain 972 / ATCC 24843) (Fission yeast)).